We begin with the raw amino-acid sequence, 127 residues long: Odontogenesis-associated phosphoprotein (127 aa).

The N-terminal stretch at 1-23 (MAPGFHFSWLLVSWLVVTTVKGQ) is a signal peptide.

As to expression, expressed in enamel organs and not expressed in the heart, kidney, or spleen.

The protein localises to the secreted. Its function is as follows. May promote nucleation of hydroxyapatite. The sequence is that of Odontogenesis-associated phosphoprotein from Rattus norvegicus (Rat).